We begin with the raw amino-acid sequence, 1219 residues long: Pleckstrin homology domain-containing family G member 3 (1219 aa).

A compositionally biased stretch (polar residues) spans 1-10; the sequence is MPVSTSLHQD. Positions 1 to 66 are disordered; it reads MPVSTSLHQD…HLPNSNNNSS (66 aa). Positions 18 to 46 are enriched in low complexity; the sequence is SLTSTTSSSGSSCDSRSAMEEPSSSEAPA. Residue Ser-76 is modified to Phosphoserine. Residues 93–272 form the DH domain; sequence YLGRVVREIV…TCVAWYINDM (180 aa). One can recognise a PH domain in the interval 296–394; it reads DLTTYGELVL…WTHHIKRLIL (99 aa). Polar residues predominate over residues 431–442; that stretch reads WSSQDEVSTNVR. Disordered stretches follow at residues 431-599 and 613-708; these read WSSQ…PSVL and FSRR…KESA. Residue Ser-433 is modified to Phosphoserine. Over residues 446–463 the composition is skewed to basic and acidic residues; the sequence is RQSEPTKHLLRQLNEKAR. Ser-576, Ser-577, Ser-618, Ser-631, Ser-640, Ser-643, and Ser-647 each carry phosphoserine. Residues 630 to 645 show a composition bias toward low complexity; sequence GSPRLVSRSSSVLSLE. Residues 696–708 are compositionally biased toward basic and acidic residues; sequence EPDRSSCKKKESA. A phosphoserine mark is found at Ser-741, Ser-779, and Ser-827. 5 disordered regions span residues 756-780, 821-840, 859-878, 955-1133, and 1146-1207; these read RFNS…VGSR, MESS…ANGF, EESA…RSPA, APER…LYVT, and VMEK…RVRN. Gly residues predominate over residues 826–836; that stretch reads GSPGKGPGQGQ. The span at 859–873 shows a compositional bias: low complexity; sequence EESATASPESSSPTE. Ser-962, Ser-1011, Ser-1023, Ser-1037, and Ser-1040 each carry phosphoserine. Polar residues predominate over residues 1020–1029; sequence SAVSQRTTSP. Residues 1049-1065 show a composition bias toward basic and acidic residues; the sequence is DVRELCSKYASRDEARR. Position 1081 is a phosphoserine (Ser-1081). Position 1107 is an omega-N-methylarginine (Arg-1107). Residues 1187–1197 show a composition bias toward basic and acidic residues; it reads QPKEEGSRDPA.

Its subcellular location is the cytoplasm. The protein localises to the cytoskeleton. Functionally, plays a role in controlling cell polarity and cell motility by selectively binding newly polymerized actin and activating RAC1 and CDC42 to enhance local actin polymerization. The protein is Pleckstrin homology domain-containing family G member 3 of Homo sapiens (Human).